We begin with the raw amino-acid sequence, 390 residues long: 3-ketoacyl-CoA thiolase (390 aa).

The active-site Acyl-thioester intermediate is the Cys-95. Catalysis depends on proton acceptor residues His-346 and Cys-376.

Belongs to the thiolase-like superfamily. Thiolase family. In terms of assembly, heterotetramer of two alpha chains (FadB) and two beta chains (FadA).

The protein localises to the cytoplasm. It catalyses the reaction an acyl-CoA + acetyl-CoA = a 3-oxoacyl-CoA + CoA. It functions in the pathway lipid metabolism; fatty acid beta-oxidation. Its function is as follows. Catalyzes the final step of fatty acid oxidation in which acetyl-CoA is released and the CoA ester of a fatty acid two carbons shorter is formed. The sequence is that of 3-ketoacyl-CoA thiolase from Acinetobacter baumannii (strain AB307-0294).